The following is a 400-amino-acid chain: Nicotinate phosphoribosyltransferase (400 aa).

Phosphohistidine; by autocatalysis is present on histidine 220.

The protein belongs to the NAPRTase family. Transiently phosphorylated on a His residue during the reaction cycle. Phosphorylation strongly increases the affinity for substrates and increases the rate of nicotinate D-ribonucleotide production. Dephosphorylation regenerates the low-affinity form of the enzyme, leading to product release.

The catalysed reaction is nicotinate + 5-phospho-alpha-D-ribose 1-diphosphate + ATP + H2O = nicotinate beta-D-ribonucleotide + ADP + phosphate + diphosphate. It participates in cofactor biosynthesis; NAD(+) biosynthesis; nicotinate D-ribonucleotide from nicotinate: step 1/1. Functionally, catalyzes the synthesis of beta-nicotinate D-ribonucleotide from nicotinate and 5-phospho-D-ribose 1-phosphate at the expense of ATP. The chain is Nicotinate phosphoribosyltransferase from Salmonella typhimurium (strain LT2 / SGSC1412 / ATCC 700720).